The chain runs to 350 residues: Arginine/serine-rich coiled-coil protein 2 (350 aa).

2 disordered regions span residues 1-146 (MIRT…FRGR) and 328-350 (SQTH…MDAV). The span at 10-24 (QARRHEVKAKSSKKH) shows a compositional bias: basic residues. The segment covering 25–51 (RSDDTVDRDHSDKIRDRLNSSENGDEK) has biased composition (basic and acidic residues). The segment covering 52 to 132 (HRRKEKRSSR…IEKPRRHSRS (81 aa)) has biased composition (basic residues). The stretch at 146-187 (RNAAMDAQEALARRLERAKKLQEQREKESAEKQQEIAAVAAA) forms a coiled coil.

The protein belongs to the RSRC2 family.

The polypeptide is Arginine/serine-rich coiled-coil protein 2 (rsrc2) (Xenopus laevis (African clawed frog)).